We begin with the raw amino-acid sequence, 490 residues long: Transmembrane protein 185-like (490 aa).

Positions methionine 1–asparagine 31 are enriched in low complexity. 2 disordered regions span residues methionine 1–lysine 151 and asparagine 455–leucine 490. The segment covering threonine 47 to lysine 59 has biased composition (polar residues). Composition is skewed to low complexity over residues serine 66–serine 80 and asparagine 89–asparagine 108. Residues lysine 109–isoleucine 125 are compositionally biased toward polar residues. Positions glutamine 133–asparagine 145 are enriched in gly residues. Over residues serine 463–glutamate 472 the composition is skewed to acidic residues.

It belongs to the TMEM185 family.

The protein is Transmembrane protein 185-like of Dictyostelium discoideum (Social amoeba).